A 207-amino-acid chain; its full sequence is Oligoribonuclease (207 aa).

An Exonuclease domain is found at 8 to 172 (LVWIDCEMTG…ADILESVREL (165 aa)). Tyr129 is a catalytic residue.

This sequence belongs to the oligoribonuclease family.

The protein resides in the cytoplasm. 3'-to-5' exoribonuclease specific for small oligoribonucleotides. The polypeptide is Oligoribonuclease (Leifsonia xyli subsp. xyli (strain CTCB07)).